The primary structure comprises 493 residues: Transcript termination protein A18 (493 aa).

Residues 100–256 (MIELKRPLYI…NSIINIAKLS (157 aa)) form the Helicase ATP-binding domain. 113–120 (LACGFGKT) lines the ATP pocket. The short motif at 206 to 209 (DESH) is the DESH box element.

Belongs to the helicase family. Poxviruses subfamily. Interacts with G2. Might be part of a transcription complex composed at least of G2, A18, and H5.

The protein localises to the virion. Functionally, DNA helicase which seems to act as a postreplicative transcription termination factor. Involved in ATP-dependent release of nascent RNA. Forms a stable complex with single-stranded DNA, and to a lesser extent RNA. The protein is Transcript termination protein A18 of Cowpox virus (strain GRI-90 / Grishak) (CPV).